The sequence spans 155 residues: Basic phospholipase A2 PC1 (155 aa).

An N-terminal signal peptide occupies residues 1–21 (MYPAHLLVLLAVCVSLLGASA). A propeptide spanning residues 22–27 (ISNRPR) is cleaved from the precursor. Intrachain disulfides connect Cys38/Cys98, Cys54/Cys144, Cys56/Cys72, Cys71/Cys125, Cys78/Cys118, Cys87/Cys111, and Cys105/Cys116. Ca(2+) is bound by residues Tyr55, Gly57, and Gly59. His75 is an active-site residue. Asp76 contributes to the Ca(2+) binding site. Asp119 is an active-site residue.

It belongs to the phospholipase A2 family. Group I subfamily. D49 sub-subfamily. The cofactor is Ca(2+). As to expression, expressed by the venom gland.

The protein localises to the secreted. It carries out the reaction a 1,2-diacyl-sn-glycero-3-phosphocholine + H2O = a 1-acyl-sn-glycero-3-phosphocholine + a fatty acid + H(+). Functionally, snake venom phospholipase A2 (PLA2) that inhibits neuromuscular transmission by blocking acetylcholine release from the nerve termini. PLA2 catalyzes the calcium-dependent hydrolysis of the 2-acyl groups in 3-sn-phosphoglycerides. This is Basic phospholipase A2 PC1 from Laticauda colubrina (Yellow-lipped sea krait).